The chain runs to 308 residues: tRNA dimethylallyltransferase (308 aa).

8-15 (GPTGTGKS) provides a ligand contact to ATP. 10–15 (TGTGKS) is a substrate binding site.

The protein belongs to the IPP transferase family. In terms of assembly, monomer. Mg(2+) serves as cofactor.

It catalyses the reaction adenosine(37) in tRNA + dimethylallyl diphosphate = N(6)-dimethylallyladenosine(37) in tRNA + diphosphate. In terms of biological role, catalyzes the transfer of a dimethylallyl group onto the adenine at position 37 in tRNAs that read codons beginning with uridine, leading to the formation of N6-(dimethylallyl)adenosine (i(6)A). The protein is tRNA dimethylallyltransferase of Mycolicibacterium vanbaalenii (strain DSM 7251 / JCM 13017 / BCRC 16820 / KCTC 9966 / NRRL B-24157 / PYR-1) (Mycobacterium vanbaalenii).